We begin with the raw amino-acid sequence, 410 residues long: Structural protein ORF142 (410 aa).

2 disordered regions span residues 1 to 24 and 156 to 197; these read MNQN…HVDT and PTST…VNIS. Positions 161-188 are enriched in acidic residues; sequence DDNDNENRSDDDDDDDDYRNDREEVEDS.

The protein localises to the virion. This Trichoplusia ni ascovirus 2c (TnAV-2c) protein is Structural protein ORF142.